Here is a 515-residue protein sequence, read N- to C-terminus: Cytochrome P450 monooxygenase nsrP (515 aa).

A helical transmembrane segment spans residues 20-40 (FGTAAFLAVLLSALAFLSYTP). N-linked (GlcNAc...) asparagine glycans are attached at residues asparagine 84, asparagine 406, and asparagine 411. Cysteine 452 contributes to the heme binding site.

This sequence belongs to the cytochrome P450 family. It depends on heme as a cofactor.

It localises to the membrane. The protein operates within secondary metabolite biosynthesis. Its function is as follows. Cytochrome P450 monooxygenase; part of the gene cluster that mediates the biosynthesis of the tetrahydroxanthone dimer neosartorin, which exhibits antibacterial activity. The two different monomeric units appear to be synthesized by the same set of enzymes, among which the Baeyer-Villiger monooxygenase nsrF is the key enzyme for the divergence of the biosynthetic routes. The pathway begins with the synthesis of atrochrysone thioester by the polyketide synthase nsrB. The atrochrysone carboxyl ACP thioesterase nsrC then breaks the thioester bond and releases the atrochrysone carboxylic acid from AacuL. Atrochrysone carboxylic acid is decarboxylated by the decarboxylase nsrE, and oxidized by the anthrone oxygenase nsrD to yield emodin. Emodin is then reduced to emodin hydroquinone by the oxidoreductase nsrR. A-ring reduction by the short chain dehydrogenase nsrJ, dehydration by the scytalone dehydratase-like protein nsrI and probable spontaneous re-oxidation, results in overall deoxygenation to chrysophanol. The Baeyer-Villiger monooxygenase nsrF accepts chrysophanol as a substrate to insert one oxygen atom at two different positions to yield the precursors of both monomric units. NsrF is promiscuous/flexible in interacting with the 2 (non methylated and methylated) aromatic rings of chrysophanol, thus diverging the biosynthetic pathway at this point. After the hydrolysis of the lactones, methylesterification by the methyltransferase nsrG yields respectively moniliphenone and 2,2',6'-trihydroxy-4-methyl-6-methoxya-cyldiphenylmethanone. The next steps are the hydroxylation by the FAD-dependent monooxygenase nsrK, followed by isomerization by the monooxygenase nsrQ. The short chain dehydrogenase/reductase nsrO then catalyzes the C-5 ketoreduction to give the xanthone skeleton of blennolide C and 5-acetylblennolide A. The acetyltransferase nsrL has a strict substrate specificity and uses only blennolide A but not blennolide C to yield 5-acetylblennolide A as the single-acetylated product. In the final step of the biosynthesis, the heterodimerization of the 2 xanthones, blennolide C and 5-acetylblennolide A, is catalyzed by the cytochrome P450 monooxygenase nsrP. NsrP can utilize at least three different xanthones as its substrates to perform the dimerization reaction. The chain is Cytochrome P450 monooxygenase nsrP from Aspergillus novofumigatus (strain IBT 16806).